A 142-amino-acid polypeptide reads, in one-letter code: Small ribosomal subunit protein bS6 (142 aa).

The segment covering 113–136 (IKKEPREPREPRAPREPKAEKIEE) has biased composition (basic and acidic residues). Residues 113-142 (IKKEPREPREPRAPREPKAEKIEEQTFSEE) are disordered.

Belongs to the bacterial ribosomal protein bS6 family.

Binds together with bS18 to 16S ribosomal RNA. This is Small ribosomal subunit protein bS6 from Campylobacter curvus (strain 525.92).